Reading from the N-terminus, the 76-residue chain is uncharacterized protein (76 aa).

This is an uncharacterized protein from Escherichia coli O157:H7.